The sequence spans 1570 residues: Mediator of RNA polymerase II transcription subunit 1 (1570 aa).

2 consecutive short sequence motifs (LXXLL motif) follow at residues 585–589 (LTSLL) and 626–630 (LMNLL). 3 disordered regions span residues 592–687 (TNNT…TEDD), 771–880 (SKLS…FKDF), and 922–1561 (SKTL…MDDD). The segment covering 675-687 (TGAEKMKNQTEDD) has biased composition (basic and acidic residues). Composition is skewed to polar residues over residues 788–801 (RDSS…STLF), 832–861 (GSPN…QSGF), and 931–942 (QETQSRSQSPLL). Residues 946 to 958 (LGKDRPQKQKVKE) are compositionally biased toward basic and acidic residues. Residues 961–970 (NGGGAGGGLS) are compositionally biased toward gly residues. Low complexity-rich tracts occupy residues 1022 to 1035 (PTST…GTSG), 1066 to 1082 (SSHG…SSSS), 1089 to 1113 (SSLS…MKIG), 1121 to 1140 (SGQS…SMGK), and 1152 to 1161 (SSNVSNSSGS). The span at 1173–1190 (MNPSLSKPNISPSHSRPS) shows a compositional bias: polar residues. Residues 1217-1228 (GSGGQHLSGGGS) show a composition bias toward gly residues. A compositionally biased stretch (low complexity) spans 1229–1271 (NSTTKSSSGLVSSGSLSQKPNSSSSSSSSSSSSSSSSSSSSSS). Positions 1276 to 1287 (VSQNLHGNSKGK) are enriched in polar residues. Residues 1308-1328 (VGTGGPGSEDPMDGGGGGGST) show a composition bias toward gly residues. The segment covering 1347 to 1359 (PTKREKSEKDKSK) has biased composition (basic and acidic residues). Polar residues-rich tracts occupy residues 1418–1433 (SQMQ…SGST) and 1441–1455 (PSHN…QALD). A compositionally biased stretch (low complexity) spans 1459 to 1469 (ESGSSSIAEKS). A compositionally biased stretch (basic residues) spans 1494–1503 (KHKKHKKEKK). Residues 1504 to 1516 (RLKDKDRDREKKK) are compositionally biased toward basic and acidic residues. Residues 1536 to 1546 (MAMSGGSMMSS) show a composition bias toward low complexity.

This sequence belongs to the Mediator complex subunit 1 family. As to quaternary structure, component of the Mediator complex.

It is found in the nucleus. Component of the Mediator complex, a coactivator involved in the regulated transcription of nearly all RNA polymerase II-dependent genes. Mediator functions as a bridge to convey information from gene-specific regulatory proteins to the basal RNA polymerase II transcription machinery. Mediator is recruited to promoters by direct interactions with regulatory proteins and serves as a scaffold for the assembly of a functional preinitiation complex with RNA polymerase II and the general transcription factors. This Xenopus laevis (African clawed frog) protein is Mediator of RNA polymerase II transcription subunit 1 (med1).